We begin with the raw amino-acid sequence, 350 residues long: Glycerol-1-phosphate dehydrogenase [NAD(P)+] (350 aa).

Residues 97–101 (GSIID) and 119–122 (TTAS) each bind NAD(+). Position 124 (D124) interacts with substrate. Position 128 (S128) interacts with NAD(+). Residue D171 participates in substrate binding. D171 and H251 together coordinate Zn(2+). Position 255 (H255) interacts with substrate. H267 provides a ligand contact to Zn(2+).

This sequence belongs to the glycerol-1-phosphate dehydrogenase family. Zn(2+) is required as a cofactor.

Its subcellular location is the cytoplasm. It carries out the reaction sn-glycerol 1-phosphate + NAD(+) = dihydroxyacetone phosphate + NADH + H(+). The catalysed reaction is sn-glycerol 1-phosphate + NADP(+) = dihydroxyacetone phosphate + NADPH + H(+). It participates in membrane lipid metabolism; glycerophospholipid metabolism. Functionally, catalyzes the NAD(P)H-dependent reduction of dihydroxyacetonephosphate (DHAP or glycerone phosphate) to glycerol 1-phosphate (G1P). The G1P thus generated is used as the glycerophosphate backbone of phospholipids in the cellular membranes of Archaea. This chain is Glycerol-1-phosphate dehydrogenase [NAD(P)+], found in Thermococcus sibiricus (strain DSM 12597 / MM 739).